The sequence spans 159 residues: Adult-specific rigid cuticular protein 15.7 (159 aa).

The Chitin-binding type R&amp;R domain maps to 23–89; that stretch reads LGNYAFNYGI…SIKTNEPGTA (67 aa).

In terms of biological role, component of the rigid cuticle of the spider. The sequence is that of Adult-specific rigid cuticular protein 15.7 from Araneus diadematus (European garden spider).